A 231-amino-acid chain; its full sequence is Ribosyldihydronicotinamide dehydrogenase [quinone] (231 aa).

Residues histidine 12 and 18–21 (FNGS) contribute to the FAD site. Serine 80 is subject to Phosphoserine. Position 104–107 (104–107 (LYWF)) interacts with FAD. 127–129 (FDI) serves as a coordination point for substrate. FAD contacts are provided by residues 148–151 (TTGG) and tyrosine 156. Zn(2+) is bound by residues histidine 174 and histidine 178. FAD is bound at residue glutamate 194. Serine 197 is modified (phosphoserine). Arginine 201 contacts FAD. Cysteine 223 lines the Zn(2+) pocket.

It belongs to the NAD(P)H dehydrogenase (quinone) family. In terms of assembly, homodimer. The cofactor is Zn(2+). It depends on FAD as a cofactor.

It is found in the cytoplasm. The enzyme catalyses 1-(beta-D-ribofuranosyl)-1,4-dihydronicotinamide + a quinone + H(+) = beta-nicotinamide D-riboside + a quinol. Its function is as follows. The enzyme apparently serves as a quinone reductase in connection with conjugation reactions of hydroquinones involved in detoxification pathways as well as in biosynthetic processes such as the vitamin K-dependent gamma-carboxylation of glutamate residues in prothrombin synthesis. The polypeptide is Ribosyldihydronicotinamide dehydrogenase [quinone] (NQO2) (Pongo abelii (Sumatran orangutan)).